We begin with the raw amino-acid sequence, 575 residues long: Probable ferredoxin/ferredoxin--NADP reductase (575 aa).

4Fe-4S ferredoxin-type domains follow at residues 2 to 29 and 37 to 66; these read PHVITQSCCNDASCVFACPVNCIHPTPD and EMLYIDPVACVDCGACVTACPVSAIAPNTR. Positions 9, 15, 19, 46, 49, 52, and 56 each coordinate [4Fe-4S] cluster. A ferredoxin--NADP reductase region spans residues 115–575; that stretch reads VAVVGSGPAA…GQPIVLTVPL (461 aa). FAD is bound by residues A123, E143, L151, and I187. NADP(+) is bound by residues R213, 258 to 261, 302 to 303, and E314; these read NGNV and RR. Residues W456 and 463–465 contribute to the FAD site; that span reads GFI. G463 serves as a coordination point for NADP(+).

In the C-terminal section; belongs to the ferredoxin--NADP reductase family. Requires [4Fe-4S] cluster as cofactor. The cofactor is FAD.

It carries out the reaction 2 reduced [2Fe-2S]-[ferredoxin] + NADP(+) + H(+) = 2 oxidized [2Fe-2S]-[ferredoxin] + NADPH. This chain is Probable ferredoxin/ferredoxin--NADP reductase (fprB), found in Mycobacterium bovis (strain ATCC BAA-935 / AF2122/97).